Here is a 466-residue protein sequence, read N- to C-terminus: Argininosuccinate lyase (466 aa).

It belongs to the lyase 1 family. Argininosuccinate lyase subfamily.

It localises to the cytoplasm. The catalysed reaction is 2-(N(omega)-L-arginino)succinate = fumarate + L-arginine. Its pathway is amino-acid biosynthesis; L-arginine biosynthesis; L-arginine from L-ornithine and carbamoyl phosphate: step 3/3. The sequence is that of Argininosuccinate lyase from Desulfovibrio desulfuricans (strain ATCC 27774 / DSM 6949 / MB).